A 233-amino-acid chain; its full sequence is Probable fimbrial chaperone protein ElfD (233 aa).

An N-terminal signal peptide occupies residues M1–A26.

It belongs to the periplasmic pilus chaperone family.

It localises to the periplasm. Part of the elfADCG-ycbUVF fimbrial operon, which promotes adhesion of bacteria to different abiotic surfaces. Could be required for the biogenesis of the ElfA fimbriae. The chain is Probable fimbrial chaperone protein ElfD (elfD) from Escherichia coli (strain K12).